The chain runs to 603 residues: Pyruvate oxidase (603 aa).

The interval 1–191 (MVMKQTKQTN…WYASANSYQT (191 aa)) is core. The FAD-binding stretch occupies residues 192-342 (PLLPEPDVQA…ILAQVSERES (151 aa)). The interval 343–603 (TPWWQANLAN…LQHQIGQGGF (261 aa)) is thiamine pyrophosphate binding. Mg(2+)-binding residues include D447, N474, and Q476.

The protein belongs to the TPP enzyme family. As to quaternary structure, homotetramer. It depends on FAD as a cofactor. Requires Mg(2+) as cofactor. Thiamine diphosphate is required as a cofactor.

It catalyses the reaction pyruvate + phosphate + O2 + H(+) = acetyl phosphate + H2O2 + CO2. Functionally, important for the aerobic growth. Decarboxylates pyruvate in four steps. The energy released is partially stored in acetyl phosphate. The sequence is that of Pyruvate oxidase (pox5) from Lactiplantibacillus plantarum (strain ATCC BAA-793 / NCIMB 8826 / WCFS1) (Lactobacillus plantarum).